The chain runs to 112 residues: uncharacterized protein (112 aa).

To Buchnera BU585.

This is an uncharacterized protein from Buchnera aphidicola subsp. Schizaphis graminum (strain Sg).